A 701-amino-acid polypeptide reads, in one-letter code: C6 finger domain transcription factor nscR (701 aa).

The zn(2)-C6 fungal-type DNA-binding region spans 17–43 (CELCRERKVKCDKLDPCTNCSSAGVIC).

It is found in the nucleus. Transcription factor that specifically regulates the neosartoricin B biosynthesis gene cluster. In Arthroderma benhamiae (strain ATCC MYA-4681 / CBS 112371) (Trichophyton mentagrophytes), this protein is C6 finger domain transcription factor nscR.